The primary structure comprises 338 residues: MKAAVLHEFGQSLQIEEVDIPTPGAGEIVVKMQASGVCHTDLHAVEGDWPVKPSPPFIPGHEGVGLITAVGEGVTHVKEGDRVGVAWLYSACGHCTHCLGGWETLCESQQNSGYSVNGSFAEYVLANANYVGIIPESVDSIEIAPVLCAGVTVYKGLKMTDTKPGDWVVISGIGGLGHMAVQYAIAMGLNVAAVDIDDDKLAFAKKLGAKVTVNAKNTDPAEYLQKEIGGAHGALVTAVSAKAFDQALSMLRRGGTLVCNGLPPGDFPVSIFDTVLNGITIRGSIVGTRLDLQESLDMAAAGKVKATVTAEPLENINDIFERMRQGKIEGRIVIDYTM.

The Zn(2+) site is built by Cys38, His61, Glu62, Cys92, Cys95, Cys98, Cys106, and Cys148.

The protein belongs to the zinc-containing alcohol dehydrogenase family. As to quaternary structure, homotetramer. It depends on Zn(2+) as a cofactor.

The catalysed reaction is a primary alcohol + NAD(+) = an aldehyde + NADH + H(+). The enzyme catalyses a secondary alcohol + NAD(+) = a ketone + NADH + H(+). It catalyses the reaction ethanol + NAD(+) = acetaldehyde + NADH + H(+). It carries out the reaction 1-propanol + NAD(+) = propanal + NADH + H(+). The catalysed reaction is butan-1-ol + NAD(+) = butanal + NADH + H(+). The enzyme catalyses propan-2-ol + NAD(+) = acetone + NADH + H(+). Functionally, psychrophilic alcohol dehydrogenase that exhibits a wide range of substrate specificity, oxidizing mainly primary and secondary aliphatic alcohols, utilizing NAD(+) as a cosubstrate. In vitro, shows highest reaction rates for ethanol as a substrate and gradually decreases its reaction rates as the length and branching of the carbon chain of the alcohol substrates increase. To a lesser extent, is also able to reduce aldehydes and ketones. Do not catalyze the further oxidation of aldehydes to carboxylic acids. Cannot use NADP(+) instead of NAD(+). The protein is Alcohol dehydrogenase of Moraxella sp. (strain TAE123).